A 124-amino-acid polypeptide reads, in one-letter code: Small ribosomal subunit protein uS12 (124 aa).

Asp89 is subject to 3-methylthioaspartic acid. The residue at position 108 (Lys108) is an N6-acetyllysine.

It belongs to the universal ribosomal protein uS12 family. Part of the 30S ribosomal subunit. Contacts proteins S8 and S17. May interact with IF1 in the 30S initiation complex.

In terms of biological role, with S4 and S5 plays an important role in translational accuracy. Interacts with and stabilizes bases of the 16S rRNA that are involved in tRNA selection in the A site and with the mRNA backbone. Located at the interface of the 30S and 50S subunits, it traverses the body of the 30S subunit contacting proteins on the other side and probably holding the rRNA structure together. The combined cluster of proteins S8, S12 and S17 appears to hold together the shoulder and platform of the 30S subunit. The protein is Small ribosomal subunit protein uS12 of Escherichia coli (strain K12 / MC4100 / BW2952).